A 623-amino-acid polypeptide reads, in one-letter code: Lamin-B2.L (623 aa).

Over residues 1-18 (MATTTPSRSTRSSMQSPA) the composition is skewed to low complexity. Positions 1–30 (MATTTPSRSTRSSMQSPARGTSTPLSPTRI) are disordered. The segment at 2–27 (ATTTPSRSTRSSMQSPARGTSTPLSP) is head. Residues 19–30 (RGTSTPLSPTRI) are compositionally biased toward polar residues. Ser26 bears the Phosphoserine mark. The segment at 28-64 (TRISRLQEKEELRHLNDRLAVYIDRVRALELENDRLM) is coil 1A. An IF rod domain is found at 35 to 391 (EKEELRHLND…KLLEGEEERL (357 aa)). Residues 64–74 (MVKISEKEEVT) are linker 1. The tract at residues 75–211 (TREVSGIKNL…QSLQEEMDFR (137 aa)) is coil 1B. The interval 212 to 235 (KNIYEEESRETRKRHERRIVEVDR) is linker 2. A coil 2 region spans residues 236 to 378 (GHHYDYESKL…VKLALDLEIN (143 aa)). The tail stretch occupies residues 380-592 (YRKLLEGEEE…VTKSVLRNVE (213 aa)). Disordered regions lie at residues 388 to 473 (EERL…LSQQ) and 591 to 623 (VEEEEDEDADFGEEDLFHQQGDPRTTSRGCSVM). Position 396 is a phosphoserine (Ser396). Residues 398–416 (ESRVTVSRATSSSSSATRT) show a composition bias toward low complexity. The Nuclear localization signal signature appears at 420–425 (KRRRVE). Residues 443 to 473 (LGSSRITASEGSSRTITSGQSSTTRFHLSQQ) show a composition bias toward polar residues. The LTD domain maps to 468 to 585 (FHLSQQASAT…EEVAVRTVTK (118 aa)). Acidic residues predominate over residues 592–604 (EEEEDEDADFGEE). A compositionally biased stretch (polar residues) spans 612–623 (DPRTTSRGCSVM). Cys620 bears the Cysteine methyl ester mark. The S-farnesyl cysteine moiety is linked to residue Cys620. Residues 621–623 (SVM) constitute a propeptide, removed in mature form.

It belongs to the intermediate filament family. Phosphorylation plays a key role in lamin organization, subcellular localization and nuclear envelope disintegration. Phosphorylation by CDK1 at Ser-26 at the onset of mitosis drives lamin disassembly and nuclear envelope breakdown.

The protein resides in the nucleus lamina. The protein localises to the nucleus envelope. It localises to the nucleus. It is found in the nucleoplasm. Its subcellular location is the nucleus matrix. Its function is as follows. Lamins are intermediate filament proteins that assemble into a filamentous meshwork, and which constitute the major components of the nuclear lamina, a fibrous layer on the nucleoplasmic side of the inner nuclear membrane. Lamins provide a framework for the nuclear envelope, bridging the nuclear envelope and chromatin, thereby playing an important role in nuclear assembly, chromatin organization, nuclear membrane and telomere dynamics. The structural integrity of the lamina is strictly controlled by the cell cycle, as seen by the disintegration and formation of the nuclear envelope in prophase and telophase, respectively. The chain is Lamin-B2.L (lmnb2.L) from Xenopus laevis (African clawed frog).